We begin with the raw amino-acid sequence, 121 residues long: Large ribosomal subunit protein uL14 (121 aa).

It belongs to the universal ribosomal protein uL14 family. As to quaternary structure, part of the 50S ribosomal subunit. Forms a cluster with proteins L3 and L19. In the 70S ribosome, L14 and L19 interact and together make contacts with the 16S rRNA in bridges B5 and B8.

Binds to 23S rRNA. Forms part of two intersubunit bridges in the 70S ribosome. In Aquifex pyrophilus, this protein is Large ribosomal subunit protein uL14.